The primary structure comprises 406 residues: Vacuole membrane protein 1 (406 aa).

At alanine 2 the chain carries N-acetylalanine. The Cytoplasmic segment spans residues 2–43; the sequence is AENGQNCDQRRVAMNKEQYNGNFTDPSSVNEKKRRDREERQN. Residues 44–63 form a helical membrane-spanning segment; the sequence is IVLWRQPLITLQYFSLETLV. At 64-77 the chain is on the extracellular side; it reads ILKEWTSKLWHRQS. The chain crosses the membrane as a helical span at residues 78–98; the sequence is IVVSFLLLLAVLTATYYVEGA. Residues 99–109 are Cytoplasmic-facing; sequence HQQYVQRIEKQ. The helical transmembrane segment at 110-130 threads the bilayer; sequence FLLYAYWIGLGILSSVGLGTG. At 131-250 the chain is on the extracellular side; that stretch reads LHTFLLYLGP…ASRAKLAVQN (120 aa). The interval 173-316 is VTT domain; the sequence is GTEGTISLWS…FVIVAFSKHI (144 aa). The helical transmembrane segment at 251 to 271 threads the bilayer; that stretch reads LVQKVGFFGILACASIPNPLF. Residues 272-273 lie on the Cytoplasmic side of the membrane; it reads DL. The helical transmembrane segment at 274 to 294 threads the bilayer; sequence AGITCGHFLVPFWTFFGATLI. The Extracellular segment spans residues 295–306; sequence GKAIIKMHIQKL. Residues 307 to 327 traverse the membrane as a helical segment; that stretch reads FVIVAFSKHIVEQMVAFIGAV. At 328 to 363 the chain is on the cytoplasmic side; it reads PGIGPSLQKPFQEYLEAQRQKLHHRSEMGTPQGENW. Residues 364–384 traverse the membrane as a helical segment; it reads LSWMFEKLVVVMVCYFILSII. Topologically, residues 385–406 are extracellular; it reads NSMAQSYAKRIQQRLDPKEKTK.

Belongs to the VMP1 family. Interacts with BECN1. Interacts with TJP1. Interacts with TP53INP2. Interacts with TMEM41B. Interacts with ATP2A2, PLN and SLN; competes with PLN and SLN to prevent them from forming an inhibitory complex with ATP2A2. Interacts with ATG2A.

It is found in the endoplasmic reticulum-Golgi intermediate compartment membrane. It localises to the cell membrane. Its subcellular location is the vacuole membrane. The protein localises to the endoplasmic reticulum membrane. The enzyme catalyses a 1,2-diacyl-sn-glycero-3-phospho-L-serine(in) = a 1,2-diacyl-sn-glycero-3-phospho-L-serine(out). It catalyses the reaction cholesterol(in) = cholesterol(out). It carries out the reaction a 1,2-diacyl-sn-glycero-3-phosphocholine(in) = a 1,2-diacyl-sn-glycero-3-phosphocholine(out). The catalysed reaction is a 1,2-diacyl-sn-glycero-3-phosphoethanolamine(in) = a 1,2-diacyl-sn-glycero-3-phosphoethanolamine(out). Phospholipid scramblase involved in lipid homeostasis and membrane dynamics processes. Has phospholipid scramblase activity toward cholesterol and phosphatidylserine, as well as phosphatidylethanolamine and phosphatidylcholine. Required for autophagosome formation: participates in early stages of autophagosome biogenesis at the endoplasmic reticulum (ER) membrane by reequilibrating the leaflets of the ER as lipids are extracted by ATG2 (ATG2A or ATG2B) to mediate autophagosome assembly. Regulates ATP2A2 activity to control ER-isolation membrane contacts for autophagosome formation. In addition to autophagy, involved in other processes in which phospholipid scramblase activity is required. Modulates ER contacts with lipid droplets, mitochondria and endosomes. Plays an essential role in formation of cell junctions. Upon stress such as bacterial and viral infection, promotes formation of cytoplasmic vacuoles followed by cell death. Involved in the cytoplasmic vacuolization of acinar cells during the early stage of acute pancreatitis. The sequence is that of Vacuole membrane protein 1 from Bos taurus (Bovine).